The sequence spans 415 residues: Serine--tRNA ligase (415 aa).

An L-serine-binding site is contributed by 231–233 (TAE). 262-264 (RSE) contacts ATP. Residue Glu-285 coordinates L-serine. Residue 349-352 (EISS) participates in ATP binding. An L-serine-binding site is contributed by Ser-383.

This sequence belongs to the class-II aminoacyl-tRNA synthetase family. Type-1 seryl-tRNA synthetase subfamily. As to quaternary structure, homodimer. The tRNA molecule binds across the dimer.

The protein resides in the cytoplasm. It catalyses the reaction tRNA(Ser) + L-serine + ATP = L-seryl-tRNA(Ser) + AMP + diphosphate + H(+). The catalysed reaction is tRNA(Sec) + L-serine + ATP = L-seryl-tRNA(Sec) + AMP + diphosphate + H(+). It participates in aminoacyl-tRNA biosynthesis; selenocysteinyl-tRNA(Sec) biosynthesis; L-seryl-tRNA(Sec) from L-serine and tRNA(Sec): step 1/1. Catalyzes the attachment of serine to tRNA(Ser). Is also able to aminoacylate tRNA(Sec) with serine, to form the misacylated tRNA L-seryl-tRNA(Sec), which will be further converted into selenocysteinyl-tRNA(Sec). This is Serine--tRNA ligase from Helicobacter pylori (strain G27).